The chain runs to 81 residues: Prophage excisionase-like protein (81 aa).

It to lambdoid phages excisionases.

The chain is Prophage excisionase-like protein (xisE) from Escherichia coli (strain K12).